Reading from the N-terminus, the 93-residue chain is Small hydrophobic protein (93 aa).

Helical transmembrane passes span 5–25 and 32–52; these read LIIIGAAFLVGPRTFKFVLAY and AFGPPLQIVQFMVWLIIIYFP.

It is found in the membrane. The protein is Small hydrophobic protein of Tupaia virus (isolate Tupaia/Thailand/-/1986) (TUPV).